Consider the following 329-residue polypeptide: MKNILQSTECLEDQQNVSIRPNLLDEFIGQSSVVNNLKIFINAAYTRKEPMDHVLLYGPPGLGKTTLAHIIAKELKVNFRSTAGPLLSKAGDLAAILTNLQAKDILFIDEIHRLNRNIEEILYSAMEDFCLDIIVGEGCGARTLRVDLPKFTLVGATTRIGLLSNPLRDRFGIPIHLEFYSTEELIKVIQRAAKVIKTDISDSGAQEISLRARGTPRIALRLLRRIRDFIEVTEHNKTITDTFADKALLRLGIDKLGLDRQDIQYLKFIHDSNNPTGIDTISSGLSEDTGNIEETIEPYLIKINFIQRTPRGRVITQKAISYLKEQSYI.

Residues 1 to 180 (MKNILQSTEC…FGIPIHLEFY (180 aa)) form a large ATPase domain (RuvB-L) region. Residues isoleucine 19, arginine 20, glycine 61, lysine 64, threonine 65, threonine 66, 127–129 (EDF), arginine 170, tyrosine 180, and arginine 217 contribute to the ATP site. Threonine 65 contacts Mg(2+). Residues 181-252 (STEELIKVIQ…FADKALLRLG (72 aa)) are small ATPAse domain (RuvB-S). The segment at 255–329 (KLGLDRQDIQ…ISYLKEQSYI (75 aa)) is head domain (RuvB-H). 2 residues coordinate DNA: arginine 308 and arginine 313.

The protein belongs to the RuvB family. As to quaternary structure, homohexamer. Forms an RuvA(8)-RuvB(12)-Holliday junction (HJ) complex. HJ DNA is sandwiched between 2 RuvA tetramers; dsDNA enters through RuvA and exits via RuvB. An RuvB hexamer assembles on each DNA strand where it exits the tetramer. Each RuvB hexamer is contacted by two RuvA subunits (via domain III) on 2 adjacent RuvB subunits; this complex drives branch migration. In the full resolvosome a probable DNA-RuvA(4)-RuvB(12)-RuvC(2) complex forms which resolves the HJ.

It is found in the cytoplasm. It catalyses the reaction ATP + H2O = ADP + phosphate + H(+). The RuvA-RuvB-RuvC complex processes Holliday junction (HJ) DNA during genetic recombination and DNA repair, while the RuvA-RuvB complex plays an important role in the rescue of blocked DNA replication forks via replication fork reversal (RFR). RuvA specifically binds to HJ cruciform DNA, conferring on it an open structure. The RuvB hexamer acts as an ATP-dependent pump, pulling dsDNA into and through the RuvAB complex. RuvB forms 2 homohexamers on either side of HJ DNA bound by 1 or 2 RuvA tetramers; 4 subunits per hexamer contact DNA at a time. Coordinated motions by a converter formed by DNA-disengaged RuvB subunits stimulates ATP hydrolysis and nucleotide exchange. Immobilization of the converter enables RuvB to convert the ATP-contained energy into a lever motion, pulling 2 nucleotides of DNA out of the RuvA tetramer per ATP hydrolyzed, thus driving DNA branch migration. The RuvB motors rotate together with the DNA substrate, which together with the progressing nucleotide cycle form the mechanistic basis for DNA recombination by continuous HJ branch migration. Branch migration allows RuvC to scan DNA until it finds its consensus sequence, where it cleaves and resolves cruciform DNA. This chain is Holliday junction branch migration complex subunit RuvB, found in Ehrlichia canis (strain Jake).